The sequence spans 310 residues: Probable metallo-hydrolase Mb2322c (310 aa).

A disordered region spans residues M1–Q29. Zn(2+) contacts are provided by H137, D139, D141, H142, H221, D242, and H288.

It belongs to the metallo-beta-lactamase superfamily. Zn(2+) serves as cofactor.

The chain is Probable metallo-hydrolase Mb2322c from Mycobacterium bovis (strain ATCC BAA-935 / AF2122/97).